Reading from the N-terminus, the 113-residue chain is Large ribosomal subunit protein eL31B (113 aa).

The protein belongs to the eukaryotic ribosomal protein eL31 family. In terms of assembly, component of the large ribosomal subunit (LSU). Mature yeast ribosomes consist of a small (40S) and a large (60S) subunit. The 40S small subunit contains 1 molecule of ribosomal RNA (18S rRNA) and 33 different proteins (encoded by 57 genes). The large 60S subunit contains 3 rRNA molecules (25S, 5.8S and 5S rRNA) and 46 different proteins (encoded by 81 genes).

Its subcellular location is the cytoplasm. Functionally, component of the ribosome, a large ribonucleoprotein complex responsible for the synthesis of proteins in the cell. The small ribosomal subunit (SSU) binds messenger RNAs (mRNAs) and translates the encoded message by selecting cognate aminoacyl-transfer RNA (tRNA) molecules. The large subunit (LSU) contains the ribosomal catalytic site termed the peptidyl transferase center (PTC), which catalyzes the formation of peptide bonds, thereby polymerizing the amino acids delivered by tRNAs into a polypeptide chain. The nascent polypeptides leave the ribosome through a tunnel in the LSU and interact with protein factors that function in enzymatic processing, targeting, and the membrane insertion of nascent chains at the exit of the ribosomal tunnel. The chain is Large ribosomal subunit protein eL31B from Saccharomyces cerevisiae (strain ATCC 204508 / S288c) (Baker's yeast).